Here is a 442-residue protein sequence, read N- to C-terminus: Tubulin beta chain (442 aa).

Residues Q11, E69, S138, G142, T143, G144, N204, and N226 each contribute to the GTP site. Residue E69 coordinates Mg(2+).

The protein belongs to the tubulin family. In terms of assembly, dimer of alpha and beta chains. A typical microtubule is a hollow water-filled tube with an outer diameter of 25 nm and an inner diameter of 15 nM. Alpha-beta heterodimers associate head-to-tail to form protofilaments running lengthwise along the microtubule wall with the beta-tubulin subunit facing the microtubule plus end conferring a structural polarity. Microtubules usually have 13 protofilaments but different protofilament numbers can be found in some organisms and specialized cells. It depends on Mg(2+) as a cofactor.

The protein resides in the cytoplasm. It localises to the cytoskeleton. Functionally, tubulin is the major constituent of microtubules, a cylinder consisting of laterally associated linear protofilaments composed of alpha- and beta-tubulin heterodimers. Microtubules grow by the addition of GTP-tubulin dimers to the microtubule end, where a stabilizing cap forms. Below the cap, tubulin dimers are in GDP-bound state, owing to GTPase activity of alpha-tubulin. The sequence is that of Tubulin beta chain from Trypanosoma cruzi.